A 394-amino-acid chain; its full sequence is Elongation factor Tu 1 (394 aa).

One can recognise a tr-type G domain in the interval 10-204 (KPHVNVGTIG…ALDSYIPEPE (195 aa)). The G1 stretch occupies residues 19–26 (GHVDHGKT). 19–26 (GHVDHGKT) provides a ligand contact to GTP. A Mg(2+)-binding site is contributed by Thr26. Residues 60 to 64 (GITIS) form a G2 region. Residues 81–84 (DCPG) are G3. GTP is bound by residues 81-85 (DCPGH) and 136-139 (NKCD). The interval 136 to 139 (NKCD) is G4. A G5 region spans residues 174-176 (SAL).

Belongs to the TRAFAC class translation factor GTPase superfamily. Classic translation factor GTPase family. EF-Tu/EF-1A subfamily. In terms of assembly, monomer.

It is found in the cytoplasm. The catalysed reaction is GTP + H2O = GDP + phosphate + H(+). Functionally, GTP hydrolase that promotes the GTP-dependent binding of aminoacyl-tRNA to the A-site of ribosomes during protein biosynthesis. The polypeptide is Elongation factor Tu 1 (Vibrio vulnificus (strain YJ016)).